We begin with the raw amino-acid sequence, 103 residues long: MKYSSTLSYTLIVHTTSSTNCKEYLNYCKVTSMDPFVSMFQTFLEVLTATVLAFTAYEAYERRMERQEKGEAMRDLIDLHRMRTIGDVIEKQEETKEKQAQGK.

Residues P35–Y57 traverse the membrane as a helical segment.

Its subcellular location is the host membrane. This is an uncharacterized protein from Acidianus bottle-shaped virus (isolate Italy/Pozzuoli) (ABV).